A 248-amino-acid polypeptide reads, in one-letter code: Small ribosomal subunit protein uS2 (248 aa).

The protein belongs to the universal ribosomal protein uS2 family.

The protein is Small ribosomal subunit protein uS2 of Cupriavidus necator (strain ATCC 17699 / DSM 428 / KCTC 22496 / NCIMB 10442 / H16 / Stanier 337) (Ralstonia eutropha).